Consider the following 303-residue polypeptide: Protoheme IX farnesyltransferase (303 aa).

The next 9 helical transmembrane spans lie at 25-45, 54-74, 104-124, 125-145, 151-171, 179-199, 227-247, 248-268, and 280-300; these read MGLV…AVVM, IPQI…ACAL, LLLL…LLNI, PSGV…SIWS, WNTV…WVAI, AIAL…ALAI, FIWL…GVVF, VVLA…TFKK, and FIYS…VSLL.

Belongs to the UbiA prenyltransferase family. Protoheme IX farnesyltransferase subfamily. As to quaternary structure, interacts with CtaA.

The protein resides in the cell membrane. The catalysed reaction is heme b + (2E,6E)-farnesyl diphosphate + H2O = Fe(II)-heme o + diphosphate. The protein operates within porphyrin-containing compound metabolism; heme O biosynthesis; heme O from protoheme: step 1/1. In terms of biological role, converts heme B (protoheme IX) to heme O by substitution of the vinyl group on carbon 2 of heme B porphyrin ring with a hydroxyethyl farnesyl side group. This is Protoheme IX farnesyltransferase from Staphylococcus aureus (strain bovine RF122 / ET3-1).